We begin with the raw amino-acid sequence, 101 residues long: Acid shock protein (101 aa).

An N-terminal signal peptide occupies residues 1-21 (MKKVLALVVAAAMGLSSAAFA). The propeptide occupies 22–59 (AETTATAAPAASTAAPAKTVHHKKHHKAAKPAAEQKAQ). The span at 26-39 (ATAAPAASTAAPAK) shows a compositional bias: low complexity. Residues 26–101 (ATAAPAASTA…AAKPAAQPAA (76 aa)) form a disordered region. Composition is skewed to basic residues over residues 40-50 (TVHHKKHHKAA), 60-69 (AAKKHHKKAA), and 79-88 (AAKKHHKKAA).

Belongs to the Asr family. In terms of processing, proteolytic processing gives rise to the active protein.

The protein localises to the periplasm. Its function is as follows. Required for growth and/or survival at acidic conditions. The chain is Acid shock protein (asr) from Enterobacter cloacae.